We begin with the raw amino-acid sequence, 70 residues long: MDVMSSSLQQQRVVVEQLRREAAIDRQTISESCAKMMKYITEHEQEDYLLTGFTSQKVNPFREKSSCTVL.

Cys-67 carries the post-translational modification Cysteine methyl ester. Cys-67 carries the S-geranylgeranyl cysteine lipid modification. The propeptide at 68–70 (TVL) is removed in mature form.

This sequence belongs to the G protein gamma family. G proteins are composed of 3 units, alpha, beta and gamma. Predominantly expressed in the central nervous system.

The protein localises to the cell membrane. Its function is as follows. Guanine nucleotide-binding proteins (G proteins) are involved as a modulator or transducer in various transmembrane signaling systems. The beta and gamma chains are required for the GTPase activity, for replacement of GDP by GTP, and for G protein-effector interaction. The polypeptide is Guanine nucleotide-binding protein subunit gamma-1 (Ggamma1) (Drosophila melanogaster (Fruit fly)).